The following is a 464-amino-acid chain: Adenosylhomocysteinase (464 aa).

3 residues coordinate substrate: Thr56, Asp131, and Glu190. 191-193 (TTT) contacts NAD(+). The substrate site is built by Lys220 and Asp224. Residues Asn225, 254-259 (GFGDVG), Glu277, Asn312, 333-335 (IGH), and Asn378 each bind NAD(+).

Belongs to the adenosylhomocysteinase family. It depends on NAD(+) as a cofactor.

Its subcellular location is the cytoplasm. The catalysed reaction is S-adenosyl-L-homocysteine + H2O = L-homocysteine + adenosine. It participates in amino-acid biosynthesis; L-homocysteine biosynthesis; L-homocysteine from S-adenosyl-L-homocysteine: step 1/1. In terms of biological role, may play a key role in the regulation of the intracellular concentration of adenosylhomocysteine. The protein is Adenosylhomocysteinase of Zymomonas mobilis subsp. mobilis (strain ATCC 31821 / ZM4 / CP4).